The sequence spans 544 residues: Chaperonin GroEL (544 aa).

Residues 30 to 33 (TLGP), K51, 87 to 91 (DGTTT), G415, and D495 contribute to the ATP site.

This sequence belongs to the chaperonin (HSP60) family. In terms of assembly, forms a cylinder of 14 subunits composed of two heptameric rings stacked back-to-back. Interacts with the co-chaperonin GroES.

Its subcellular location is the cytoplasm. The enzyme catalyses ATP + H2O + a folded polypeptide = ADP + phosphate + an unfolded polypeptide.. In terms of biological role, together with its co-chaperonin GroES, plays an essential role in assisting protein folding. The GroEL-GroES system forms a nano-cage that allows encapsulation of the non-native substrate proteins and provides a physical environment optimized to promote and accelerate protein folding. In Aeromonas salmonicida, this protein is Chaperonin GroEL.